A 103-amino-acid polypeptide reads, in one-letter code: MYAVFQSGGKQHRVTEGQTVRLEKLELEVGATVEFDNVLMIANGDNINVGAPYVAGGKVVAEVVTQARAPKITIVKFKRRKHSRKQAGHRQWFTEVKITGING.

This sequence belongs to the bacterial ribosomal protein bL21 family. As to quaternary structure, part of the 50S ribosomal subunit. Contacts protein L20.

This protein binds to 23S rRNA in the presence of protein L20. The polypeptide is Large ribosomal subunit protein bL21 (Colwellia psychrerythraea (strain 34H / ATCC BAA-681) (Vibrio psychroerythus)).